The primary structure comprises 147 residues: Ribonuclease 4 (147 aa).

Positions 1–28 (MDIQRTQSLLLLLLLTLLGLGLVQPSYG) are cleaved as a signal peptide. Position 29 is a pyrrolidone carboxylic acid (glutamine 29). 5 residues coordinate dUMP: arginine 35, histidine 40, lysine 68, asparagine 71, and threonine 72. Histidine 40 functions as the Proton acceptor in the catalytic mechanism. Cystine bridges form between cysteine 53/cysteine 109, cysteine 67/cysteine 120, cysteine 85/cysteine 135, and cysteine 92/cysteine 99. The active-site Proton donor is the histidine 144. Phenylalanine 145 contacts dUMP.

This sequence belongs to the pancreatic ribonuclease family.

It localises to the secreted. Functionally, cleaves preferentially after uridine bases. Has antimicrobial activity against uropathogenic E.coli (UPEC). Probably contributes to urinary tract sterility. The sequence is that of Ribonuclease 4 (Rnase4) from Rattus norvegicus (Rat).